The primary structure comprises 254 residues: Homeobox protein Dlx4b (254 aa).

Positions 129-188 (IRKPRTIYSSVQLQALHQRFQQTQYLALPERADLAAKLGLTQTQVKIWFQNKRSKYKKIM) form a DNA-binding region, homeobox.

The protein belongs to the distal-less homeobox family.

It localises to the nucleus. Its function is as follows. During larvae development, may be important for neurocranium morphogenesis. The sequence is that of Homeobox protein Dlx4b (dlx4b) from Danio rerio (Zebrafish).